Consider the following 214-residue polypeptide: Charged multivesicular body protein 2b-A (214 aa).

Positions 25 to 55 (QRAITRDRTALEKQEKQLEMEIKKMAKAGNK) form a coiled coil. The tract at residues 178–214 (MAKAPSAAKGLPSASASKSTGISDEEIERQLKALGVD) is disordered. An MIT-interacting motif motif is present at residues 202 to 212 (EEIERQLKALG).

It belongs to the SNF7 family. As to quaternary structure, probable core component of the endosomal sorting required for transport complex III (ESCRT-III). ESCRT-III components are thought to multimerize to form a flat lattice on the perimeter membrane of the endosome.

It is found in the cytoplasm. Its subcellular location is the cytosol. The protein localises to the late endosome membrane. Its function is as follows. Probable core component of the endosomal sorting required for transport complex III (ESCRT-III) which is involved in multivesicular bodies (MVBs) formation and sorting of endosomal cargo proteins into MVBs. MVBs contain intraluminal vesicles (ILVs) that are generated by invagination and scission from the limiting membrane of the endosome and mostly are delivered to lysosomes enabling degradation of membrane proteins, such as stimulated growth factor receptors, lysosomal enzymes and lipids. This is Charged multivesicular body protein 2b-A (chmp2b-a) from Xenopus laevis (African clawed frog).